A 229-amino-acid polypeptide reads, in one-letter code: Ras-related protein rab-39 (229 aa).

73–77 serves as a coordination point for GTP; sequence DTAGQ. 2 S-geranylgeranyl cysteine lipidation sites follow: Cys227 and Cys229. Cys229 carries the cysteine methyl ester modification.

Belongs to the small GTPase superfamily. Rab family. As to quaternary structure, interacts (in GTP-bound form) with Ras association domain-containing protein rsf-1.

Its subcellular location is the cell membrane. The protein localises to the cytoplasmic vesicle membrane. It is found in the golgi apparatus. Small GTPases Rab involved in autophagy. The small GTPases Rab are key regulators of intracellular membrane trafficking, from the formation of transport vesicles to their fusion with membranes. Rabs cycle between an inactive GDP-bound form and an active GTP-bound form that is able to recruit to membranes different sets of downstream effectors directly responsible for vesicle formation, movement, tethering and fusion. Involved in positively regulating the oxidative stress response, perhaps in concert with the Ras association domain-containing protein rsf-1. This Caenorhabditis elegans protein is Ras-related protein rab-39.